A 227-amino-acid chain; its full sequence is Abasic site processing protein YoaM (227 aa).

Cysteine 2 serves as the catalytic Nucleophile. Cysteine 2 carries the post-translational modification Thiazolidine linkage to a ring-opened DNA abasic site. Glutamate 106 is an active-site residue.

It belongs to the SOS response-associated peptidase family.

Its activity is regulated as follows. Formation and reversal of DNA-protein cross-link depends on DNA context. Catalyzes formation of the thiazolidine linkage in presence of abasic sites in single-stranded DNA. Mediates the reversal of the thiazolidine cross-link in presence of double stranded DNA. In terms of biological role, sensor of abasic sites in single-stranded DNA (ssDNA) required to preserve genome integrity by promoting error-free repair of abasic sites. Recognizes and binds abasic sites in ssDNA at replication forks and chemically modifies the lesion by forming a covalent cross-link with DNA: forms a stable thiazolidine linkage between a ring-opened abasic site and the alpha-amino and sulfhydryl substituents of its N-terminal catalytic cysteine residue. The DNA-protein cross-link is then reversed: able to catalyze the reversal of the thiazolidine cross-link and cycle between a cross-link and a non-cross-linked state depending on DNA context: mediates self-reversal of the thiazolidine cross-link in double stranded DNA. May act as a protease: mediates autocatalytic processing of its N-terminal methionine in order to expose the catalytic cysteine. This Bacillus subtilis (strain 168) protein is Abasic site processing protein YoaM (yoaM).